Consider the following 394-residue polypeptide: Outer membrane protein S1 (394 aa).

The N-terminal stretch at Met1–Ala21 is a signal peptide. The disordered stretch occupies residues Ser222 to Arg242.

This sequence belongs to the Gram-negative porin family. Homotrimer.

It is found in the cell outer membrane. In terms of biological role, forms pores that allow passive diffusion of small molecules across the outer membrane. The chain is Outer membrane protein S1 (ompS1) from Salmonella typhi.